The sequence spans 406 residues: Calsequestrin-2 (406 aa).

The signal sequence occupies residues Met1–Ala19. The N-linked (GlcNAc...) asparagine glycan is linked to Asn335. The interval Val365–Asp406 is disordered. Positions Glu373–Asp406 are enriched in acidic residues.

This sequence belongs to the calsequestrin family. As to expression, skeletal and heart muscle.

The protein resides in the sarcoplasmic reticulum lumen. In terms of biological role, calsequestrin is a high-capacity, moderate affinity, calcium-binding protein and thus acts as an internal calcium store in muscle. Calcium ions are bound by clusters of acidic residues at the protein surface, especially at the interface between subunits. Can bind around 60 Ca(2+) ions. Regulates the release of lumenal Ca(2+) via the calcium release channel RYR2; this plays an important role in triggering muscle contraction. Plays a role in excitation-contraction coupling in the heart and in regulating the rate of heart beats. The sequence is that of Calsequestrin-2 (CASQ2) from Gallus gallus (Chicken).